The chain runs to 684 residues: Galactocerebrosidase (684 aa).

The N-terminal stretch at 1–42 (MANSQPKASQQRQAKVMTAAAGSASRVAVPLLLCALLVPGGA) is a signal peptide. Residues T109, W151, and N197 each coordinate substrate. E198 (proton donor/acceptor) is an active-site residue. The Nucleophile role is filled by E274. C287 and C394 form a disulfide bridge. N-linked (GlcNAc...) asparagine glycans are attached at residues N300 and N379. Substrate is bound at residue R396. N403, N558, N601, and N645 each carry an N-linked (GlcNAc...) asparagine glycan.

It belongs to the glycosyl hydrolase 59 family. Detected in brain and kidney.

The protein resides in the lysosome. The catalysed reaction is a beta-D-galactosyl-(1&lt;-&gt;1')-N-acylsphing-4-enine + H2O = an N-acylsphing-4-enine + D-galactose. The enzyme catalyses a D-galactosylceramide + H2O = an N-acyl-sphingoid base + D-galactose. It carries out the reaction beta-D-galactosyl-(1&lt;-&gt;1)-sphing-4-enine + H2O = sphing-4-enine + D-galactose. In terms of biological role, hydrolyzes the galactose ester bonds of glycolipids such as galactosylceramide and galactosylsphingosine. Enzyme with very low activity responsible for the lysosomal catabolism of galactosylceramide, a major lipid in myelin, kidney and epithelial cells of small intestine and colon. The sequence is that of Galactocerebrosidase from Mus musculus (Mouse).